The sequence spans 304 residues: MKPFTFYEAIESNKRKTWFIVFIIYFLLFFVCYAVVSYFELGEIGIIIAFLIVLFTNYYAYQKSNEIILNYSGVREPTREEYPYLLNVVEGLSIAAGIPTPKIYIMDDPSPNAFATGKDPQNSVVVVTKGLLDILNRTELEGVIAHEISHIKNYDVRLQTIAAVMVGLIVILGDGLKRSFYYSKRRRDKDENILGIVSLIIAILAPFLATLLRFALSRQREYMADASAAMLTRYPEGLASALEKIAKNFQPIKRANVMTAPLYIVNPLSSNAVSKLFSTHPPIEERIRRLRMMGERWKMLDKEG.

Transmembrane regions (helical) follow at residues 19 to 39 and 41 to 61; these read FIVF…VSYF and LGEI…YYAY. H146 is a Zn(2+) binding site. E147 is an active-site residue. Zn(2+) is bound at residue H150. 2 helical membrane-spanning segments follow: residues 156 to 176 and 192 to 212; these read VRLQ…GDGL and NILG…ATLL. Position 221 (E221) interacts with Zn(2+).

The protein belongs to the peptidase M48B family. It depends on Zn(2+) as a cofactor.

The protein localises to the cell inner membrane. The polypeptide is Protease HtpX homolog (Dictyoglomus turgidum (strain DSM 6724 / Z-1310)).